We begin with the raw amino-acid sequence, 324 residues long: Probable fructokinase-5 (324 aa).

Belongs to the carbohydrate kinase PfkB family.

The enzyme catalyses D-fructose + ATP = D-fructose 6-phosphate + ADP + H(+). It participates in glycan biosynthesis; starch biosynthesis. Functionally, may play an important role in maintaining the flux of carbon towards starch formation. The sequence is that of Probable fructokinase-5 from Arabidopsis thaliana (Mouse-ear cress).